The primary structure comprises 239 residues: O-antigen export system ATP-binding protein RfbE (239 aa).

An ABC transporter domain is found at 28 to 239 (VRVSTGGRIG…LIYEESMDIL (212 aa)). 66 to 73 (GHNGAGKS) is an ATP binding site.

Belongs to the ABC transporter superfamily.

It localises to the cell inner membrane. May form an ATP-driven O-antigen export apparatus, in association with RfbD. The protein is O-antigen export system ATP-binding protein RfbE (rfbE) of Yersinia enterocolitica.